We begin with the raw amino-acid sequence, 281 residues long: MNVIWRSCICRLRQGKVPHRCQSGVHPVAPLGSRILTDPAKVFEHNMWDHMQWSKEEEDAARKKVEENSATRVAPEEQVKFESDANKYWDIFYQTHKNKFFKNRNWLLREFPEILPVNQNTKEKVGESSWDQVGSSISRTQGTETHCQESFVSPEPGSRGRSAPDPDLEEYSKGPGKTEPFPGSNATFRILEVGCGAGNSVFPILNTLQNIPGSFLYCCDFASEAVELVKSHESYSEAQCSAFIHDVCDDGLAYPFPDGILDVVLLVFVLSSIHPDRALFI.

The N-terminal 22 residues, 1-22, are a transit peptide targeting the mitochondrion; the sequence is MNVIWRSCICRLRQGKVPHRCQ. K80 participates in a covalent cross-link: Glycyl lysine isopeptide (Lys-Gly) (interchain with G-Cter in SUMO). S-adenosyl-L-methionine contacts are provided by W89 and Y93. Over residues 139–151 the composition is skewed to polar residues; that stretch reads RTQGTETHCQESF. The interval 139–180 is disordered; sequence RTQGTETHCQESFVSPEPGSRGRSAPDPDLEEYSKGPGKTEP. Residues G194, D220, and D246 each coordinate S-adenosyl-L-methionine.

It belongs to the methyltransferase superfamily. METL family. As to quaternary structure, interacts with EP300. As to expression, absent in embryonic lung but is induced in a fibroblast cell line by stretch. In terms of tissue distribution, expressed in undifferentiated progenitor cells, while its expression is inhibited by stretch. Absent in undifferentiated embryonic lung mesenchymal cells, but expression is induced by stretch. As to expression, expressed in mature adipose tissue.

The protein resides in the mitochondrion. The protein localises to the cytoplasm. Its subcellular location is the nucleus. The catalysed reaction is cytidine(32) in tRNA(Ser) + S-adenosyl-L-methionine = N(3)-methylcytidine(32) in tRNA(Ser) + S-adenosyl-L-homocysteine + H(+). The enzyme catalyses cytidine(32) in tRNA(Thr) + S-adenosyl-L-methionine = N(3)-methylcytidine(32) in tRNA(Thr) + S-adenosyl-L-homocysteine + H(+). It carries out the reaction a cytidine in mRNA + S-adenosyl-L-methionine = an N(3)-methylcytidine in mRNA + S-adenosyl-L-homocysteine + H(+). Its function is as follows. Mitochondrial S-adenosyl-L-methionine-dependent methyltransferase that mediates N(3)-methylcytidine modification of residue 32 of the tRNA anticodon loop of mitochondrial tRNA(Ser)(UCN) and tRNA(Thr). N(3)-methylcytidine methylation modification regulates mitochondrial translation efficiency and is required for activity of the respiratory chain. N(3)-methylcytidine methylation of mitochondrial tRNA(Ser)(UCN) requires the formation of N(6)-dimethylallyladenosine(37) (i6A37) by TRIT1 as prerequisite. May also mediate N(3)-methylcytidine modification of mRNAs. The existence of N(3)-methylcytidine modification on mRNAs is however unclear, and additional evidences are required to confirm the role of the N(3)-methylcytidine-specific mRNA methyltransferase activity of METTL8 in vivo. Functionally, overexpression in lung progenitor cells stimulates smooth muscle-specific gene expression and suppresses adipogenic gene expression. Stimulates adipogenesis. This Mus musculus (Mouse) protein is tRNA N(3)-cytidine methyltransferase METTL8, mitochondrial.